A 1538-amino-acid polypeptide reads, in one-letter code: Lysophospholipase nte1 (1538 aa).

Over 1–74 the chain is Cytoplasmic; the sequence is MATDGGPLAA…PPPTPSTMAG (74 aa). A helical transmembrane segment spans residues 75-95; sequence WFGWVFSFFFQVIPSVLYWVI. Topologically, residues 96-117 are lumenal; sequence TFATITLPTWLFTLFSMSLTFT. Residues 118 to 138 traverse the membrane as a helical segment; it reads MNFTTLLLIALAIVSTISWFI. The Cytoplasmic portion of the chain corresponds to 139-1538; the sequence is RYRFLNMYSR…RTLAPRRASI (1400 aa). Disordered regions lie at residues 242-264, 302-393, and 529-559; these read KPNV…DHRV, EGSS…KSVH, and AAQS…GDLL. The segment covering 302 to 314 has biased composition (low complexity); the sequence is EGSSSSASSVGPS. The segment covering 329-345 has biased composition (basic and acidic residues); the sequence is GLEDSPRSNFVRDHGDS. A nucleoside 3',5'-cyclic phosphate contacts are provided by residues 692–811 and 856–976; these read GGTS…QGYV and RLTS…IAQR. The PNPLA domain occupies 1235 to 1399; sequence LVLGGGGARG…IDNLTVTHMK (165 aa). A GXGXXG motif is present at residues 1239–1244; it reads GGGARG. The GXSXG motif lies at 1266–1270; sequence GTSIG. The Nucleophile role is filled by serine 1268. Aspartate 1386 acts as the Proton acceptor in catalysis. The short motif at 1386–1388 is the DGA/G element; it reads DGG. Residues 1517–1538 form a disordered region; sequence LPEETEEKKKLQRTLAPRRASI.

It belongs to the NTE family.

The protein resides in the endoplasmic reticulum membrane. The catalysed reaction is a 1-acyl-sn-glycero-3-phosphocholine + H2O = sn-glycerol 3-phosphocholine + a fatty acid + H(+). With respect to regulation, inhibited by organophosphorus esters. Its function is as follows. Intracellular phospholipase B that catalyzes the double deacylation of phosphatidylcholine (PC) to glycerophosphocholine (GroPCho). Plays an important role in membrane lipid homeostasis. Responsible for the rapid PC turnover in response to inositol, elevated temperatures, or when choline is present in the growth medium. The protein is Lysophospholipase nte1 (nte1) of Aspergillus oryzae (strain ATCC 42149 / RIB 40) (Yellow koji mold).